A 1416-amino-acid polypeptide reads, in one-letter code: DNA-directed RNA polymerase subunit beta' (1416 aa).

4 residues coordinate Zn(2+): C71, C73, C86, and C89. Positions 461, 463, and 465 each coordinate Mg(2+). Zn(2+) is bound by residues C815, C892, C899, and C902.

Belongs to the RNA polymerase beta' chain family. In terms of assembly, the RNAP catalytic core consists of 2 alpha, 1 beta, 1 beta' and 1 omega subunit. When a sigma factor is associated with the core the holoenzyme is formed, which can initiate transcription. Mg(2+) is required as a cofactor. Requires Zn(2+) as cofactor.

The catalysed reaction is RNA(n) + a ribonucleoside 5'-triphosphate = RNA(n+1) + diphosphate. DNA-dependent RNA polymerase catalyzes the transcription of DNA into RNA using the four ribonucleoside triphosphates as substrates. This chain is DNA-directed RNA polymerase subunit beta', found in Blochmanniella pennsylvanica (strain BPEN).